A 342-amino-acid chain; its full sequence is RNA 3'-terminal phosphate cyclase (342 aa).

ATP is bound by residues Gln-100 and Phe-283 to Gln-287. His-307 serves as the catalytic Tele-AMP-histidine intermediate.

Belongs to the RNA 3'-terminal cyclase family. Type 1 subfamily.

The protein resides in the cytoplasm. The enzyme catalyses a 3'-end 3'-phospho-ribonucleotide-RNA + ATP = a 3'-end 2',3'-cyclophospho-ribonucleotide-RNA + AMP + diphosphate. In terms of biological role, catalyzes the conversion of 3'-phosphate to a 2',3'-cyclic phosphodiester at the end of RNA. The mechanism of action of the enzyme occurs in 3 steps: (A) adenylation of the enzyme by ATP; (B) transfer of adenylate to an RNA-N3'P to produce RNA-N3'PP5'A; (C) and attack of the adjacent 2'-hydroxyl on the 3'-phosphorus in the diester linkage to produce the cyclic end product. The biological role of this enzyme is unknown but it is likely to function in some aspects of cellular RNA processing. This is RNA 3'-terminal phosphate cyclase (rtcA) from Pyrococcus abyssi (strain GE5 / Orsay).